Consider the following 354-residue polypeptide: Galactoside alpha-(1,2)-fucosyltransferase 2 (354 aa).

Over Met-1–His-22 the chain is Cytoplasmic. Residues Pro-23 to Cys-43 traverse the membrane as a helical; Signal-anchor for type II membrane protein segment. Topologically, residues His-44–Leu-354 are lumenal. 3 N-linked (GlcNAc...) asparagine glycosylation sites follow: Asn-197, Asn-291, and Asn-317.

This sequence belongs to the glycosyltransferase 11 family. As to expression, salivary and lactating mammary glands.

The protein localises to the golgi apparatus. It localises to the golgi stack membrane. The enzyme catalyses a beta-D-galactosyl-(1-&gt;3)-N-acetyl-beta-D-glucosaminyl derivative + GDP-beta-L-fucose = an alpha-L-Fuc-(1-&gt;2)-beta-D-Gal-(1-&gt;3)-beta-D-GlcNAc derivative + GDP + H(+). It carries out the reaction a beta-D-galactosyl-(1-&gt;4)-N-acetyl-beta-D-glucosaminyl derivative + GDP-beta-L-fucose = an alpha-L-Fuc-(1-&gt;2)-beta-D-Gal-(1-&gt;4)-beta-D-GlcNAc derivative + GDP + H(+). It catalyses the reaction a neolactoside nLc4Cer + GDP-beta-L-fucose = a neolactoside IV(2)-alpha-Fuc-nLc4Cer + GDP + H(+). The catalysed reaction is a neolactoside nLc4Cer(d18:1(4E)) + GDP-beta-L-fucose = a neolactoside IV(2)-alpha-Fuc-nLc4Cer(d18:1(4E)) + GDP + H(+). The enzyme catalyses a ganglioside GM1 + GDP-beta-L-fucose = a ganglioside Fuc-GM1 + GDP + H(+). It carries out the reaction a ganglioside GA1 + GDP-beta-L-fucose = a ganglioside Fuc-GA1 + GDP + H(+). It catalyses the reaction Lc4Cer + GDP-beta-L-fucose = alpha-L-fucosyl-(1-&gt;2)-beta-D-galactosyl-(1-&gt;3)-N-acetyl-beta-D-glucosaminyl-(1-&gt;3)-beta-D-galactosyl-(1-&gt;4)-beta-D-glucosyl-(1&lt;-&gt;1')-ceramide + GDP + H(+). The catalysed reaction is a beta-D-Gal-(1-&gt;3)-beta-D-GlcNAc-(1-&gt;3)-beta-D-Gal-(1-&gt;4)-beta-D-Glc-(1&lt;-&gt;1')-Cer(d18:1(4E)) + GDP-beta-L-fucose = alpha-L-fucosyl-(1-&gt;2)- beta-D-galactosyl-(1-&gt;3)-N-acetyl-beta-D-glucosaminyl-(1-&gt;3)-beta-D-galactosyl-(1-&gt;4)-beta-D-glucosyl-(1&lt;-&gt;1')-N-acylsphing-4-enine + GDP + H(+). The enzyme catalyses a ganglioside GD1b + GDP-beta-L-fucose = a ganglioside Fuc-GD1b + GDP + H(+). It carries out the reaction a ganglioside GM1 (d18:1(4E)) + GDP-beta-L-fucose = a ganglioside Fuc-GM1 (d18:1(4E)) + GDP + H(+). It catalyses the reaction a globoside GalGb4Cer (d18:1(4E)) + GDP-beta-L-fucose = a globoside Globo-H (d18:1(4E)) + GDP + H(+). The catalysed reaction is a lactoside III(4)-a-Fuc-Lc4Cer + GDP-beta-L-fucose = a lactoside IV(2),III(4)-a-[Fuc]2-Lc4Cer + GDP + H(+). The enzyme catalyses beta-D-galactosyl-(1-&gt;3)-N-acetyl-D-galactosamine + GDP-beta-L-fucose = alpha-L-fucosyl-(1-&gt;2)-beta-D-galactosyl-(1-&gt;3)-N-acetyl-D-galactosamine + GDP + H(+). Its pathway is protein modification; protein glycosylation. Functionally, catalyzes the transfer of L-fucose, from a guanosine diphosphate-beta-L-fucose, to the terminal galactose on both O- and N-linked glycans chains of cell surface glycoproteins and glycolipids and the resulting epitope regulates several processes such as cell-cell interaction including host-microbe interaction, cell surface expression and cell proliferation. Preferentially fucosylates gangliosides GA1 and GM1 in the antrum, cecum and colon and in the female reproductive organs. Fucosylated host glycoproteins or glycolipids mediate interaction with intestinal microbiota influencing its composition. Creates a soluble precursor oligosaccharide FuC-alpha ((1,2)Galbeta-) called the H antigen which is an essential substrate for the final step in the soluble ABO blood group antigen synthesis pathway. The sequence is that of Galactoside alpha-(1,2)-fucosyltransferase 2 from Oryctolagus cuniculus (Rabbit).